A 257-amino-acid chain; its full sequence is Pyrroline-5-carboxylate reductase (257 aa).

Belongs to the pyrroline-5-carboxylate reductase family.

The protein localises to the cytoplasm. The catalysed reaction is L-proline + NADP(+) = (S)-1-pyrroline-5-carboxylate + NADPH + 2 H(+). It carries out the reaction L-proline + NAD(+) = (S)-1-pyrroline-5-carboxylate + NADH + 2 H(+). It functions in the pathway amino-acid biosynthesis; L-proline biosynthesis; L-proline from L-glutamate 5-semialdehyde: step 1/1. Catalyzes the reduction of 1-pyrroline-5-carboxylate (PCA) to L-proline. This Helicobacter pylori (strain ATCC 700392 / 26695) (Campylobacter pylori) protein is Pyrroline-5-carboxylate reductase.